We begin with the raw amino-acid sequence, 405 residues long: Putative arsenical pump-driving ATPase (405 aa).

ATP is bound at residue 8–15; the sequence is GKGGVGKT.

The protein belongs to the arsA ATPase family.

The enzyme catalyses arsenite(in) + ATP + H2O = arsenite(out) + ADP + phosphate + H(+). Anion-transporting ATPase. Catalyzes the extrusion of arsenite. The protein is Putative arsenical pump-driving ATPase of Chlorobaculum tepidum (strain ATCC 49652 / DSM 12025 / NBRC 103806 / TLS) (Chlorobium tepidum).